The following is a 770-amino-acid chain: ATP-dependent RNA helicase HCA4 (770 aa).

Positions 41–69 (KFFKDLPISDPTLKGLRESSFIKLTEIQA) match the Q motif motif. A Helicase ATP-binding domain is found at 72 to 246 (IPVSLQGHDV…RLSLTDYKTV (175 aa)). Position 85-92 (85-92 (AKTGSGKT)) interacts with ATP. A DEAD box motif is present at residues 194–197 (DEAD). The Helicase C-terminal domain occupies 278–437 (KLDILFSFIK…SIKPQLQSLL (160 aa)). Serine 692, serine 710, serine 714, and serine 743 each carry phosphoserine. Residues 705-724 (GTGNLSDDMSDGDMPDSEGH) are disordered.

This sequence belongs to the DEAD box helicase family. DDX10/DBP4 subfamily. In terms of assembly, interacts with the U3 and U14 snoRNAs. Associates with pre-ribosomal complexes.

It is found in the nucleus. The protein resides in the nucleolus. It catalyses the reaction ATP + H2O = ADP + phosphate + H(+). Functionally, ATP-dependent RNA helicase required for ribosome biogenesis. Involved in the release of U14 snoRNA in pre-ribosomal complexes. Required for pre-rRNA cleavage at site A2. This chain is ATP-dependent RNA helicase HCA4 (HCA4), found in Saccharomyces cerevisiae (strain ATCC 204508 / S288c) (Baker's yeast).